The chain runs to 634 residues: Transmembrane and coiled-coil domain-containing protein 4 (634 aa).

Residues 150–190 (EELDVLEEMFLESLKEIKEEESEMAEASRKKKENRRKWKRY) are a coiled coil. The next 3 helical transmembrane spans lie at 203–223 (VIGV…ATII), 231–251 (LGSA…GAGL), and 346–366 (LSGI…ANVI). The tract at residues 542-612 (EPRQAAAAAS…ERPPICSHGM (71 aa)) is disordered. Residues 552–583 (SGETPHQVGQTQGPISGDTSKLAMSTDPSQAQ) are compositionally biased toward polar residues.

Belongs to the TMCO4 family.

It is found in the membrane. In Homo sapiens (Human), this protein is Transmembrane and coiled-coil domain-containing protein 4 (TMCO4).